The chain runs to 108 residues: Large ribosomal subunit protein bL21 (108 aa).

Belongs to the bacterial ribosomal protein bL21 family. In terms of assembly, part of the 50S ribosomal subunit. Contacts protein L20.

Its function is as follows. This protein binds to 23S rRNA in the presence of protein L20. The sequence is that of Large ribosomal subunit protein bL21 from Orientia tsutsugamushi (strain Ikeda) (Rickettsia tsutsugamushi).